A 503-amino-acid chain; its full sequence is Asparagine--tRNA ligase (503 aa).

It belongs to the class-II aminoacyl-tRNA synthetase family. As to quaternary structure, homodimer.

Its subcellular location is the cytoplasm. The catalysed reaction is tRNA(Asn) + L-asparagine + ATP = L-asparaginyl-tRNA(Asn) + AMP + diphosphate + H(+). This Aster yellows witches'-broom phytoplasma (strain AYWB) protein is Asparagine--tRNA ligase.